Here is a 325-residue protein sequence, read N- to C-terminus: Aminotransferase tasG (325 aa).

Gly-35 is a substrate binding site. Pyridoxal 5'-phosphate contacts are provided by residues 89–90 (TW), Asn-143, Tyr-174, and 203–205 (SFA). Asn-143 is a substrate binding site. The residue at position 206 (Lys-206) is an N6-(pyridoxal phosphate)lysine. Arg-214 provides a ligand contact to pyridoxal 5'-phosphate.

Belongs to the class-I pyridoxal-phosphate-dependent aminotransferase family. In terms of assembly, homodimer. Pyridoxal 5'-phosphate is required as a cofactor.

Its pathway is secondary metabolite biosynthesis. Its function is as follows. Aminotransferase; part of the gene cluster that mediates the biosynthesis of the tetramic acids Sch210971 and Sch210972, potential anti-HIV fungal natural product that contain a decalin core. The PKS module of tasS together with the enoylreductase tasC catalyze the formation of the polyketide unit which is then conjugated to 4-hydroxyl-4-methyl glutamate (HMG) by the condensation domain of the tasS NRPS module. One unique structural feature of Sch210971 and Sch210972 is the tetramic acid motif proposed to be derived from the non-proteinogenic amino acid HMG, by a Dieckmann-type condensation catalyzed by the reductase domain of tasS. The aldolase tasA catalyzes the aldol condensation of 2 molecules of pyruvic acid to yield the intermediate 4-hydroxyl-4-methyl-2-oxoglutarate (HMOG), which can then be stereoselectively transaminated, may be by tasG, to form HMG. The Diels-Alderase tas3 then uses the Dieckmann product of tasS as substrate and catalyzes the Diels-Alder cycloaddition to form the decalin ring of Sch210971 and Sch210972. This is Aminotransferase tasG from Hapsidospora irregularis.